Consider the following 318-residue polypeptide: uncharacterized protein (318 aa).

To E.coli YfaT and P.aeruginosa PA4490.

This is an uncharacterized protein from Thermotoga maritima (strain ATCC 43589 / DSM 3109 / JCM 10099 / NBRC 100826 / MSB8).